The following is an 843-amino-acid chain: F-box only protein 11 (843 aa).

Positions 1-63 (MVAEESGPGA…RVSGKSQDLS (63 aa)) are disordered. Over residues 30–45 (PTKNSMEGASTSTTEN) the composition is skewed to polar residues. In terms of domain architecture, F-box spans 69–115 (QYLQEKLPDEVVLKIFSYLLEQDLCRAACVCKRFSELANDPILWKRL). 19 PbH1 repeats span residues 311–333 (GACP…YITD), 334–356 (HAQG…WVKN), 357–379 (HGNP…FTFD), 380–402 (HGMG…EVKA), 403–425 (YANP…YVHE), 426–448 (KGRG…WITS), 449–471 (NSDP…YIFG), 472–494 (DGRG…QIRT), 495–517 (NSCP…YVHE), 518–540 (KGQG…WVTT), 541–563 (GSTP…YFYD), 564–586 (NGHG…QIRT), 587–609 (GSNP…LVYN), 610–632 (SGLG…WIKT), 633–655 (DSNP…CIFN), 656–678 (GGRG…LIST), 679–701 (NSHP…EITN), 702–724 (HATA…FLAS), and 725–746 (GVNV…EKAV). Residues 749–820 (GQCLYKISSY…LSNPCTLAGE (72 aa)) form a UBR-type zinc finger.

As to quaternary structure, component of the SCF(FBXO11) complex consisting of CUL1, RBX1, SKP1 and FBXO11. Interacts with CIITA.

The protein resides in the nucleus. It localises to the chromosome. It functions in the pathway protein modification; protein ubiquitination. Substrate recognition component of a SCF (SKP1-CUL1-F-box protein) E3 ubiquitin-protein ligase complex which mediates the ubiquitination and subsequent proteasomal degradation of target proteins, such as DTL/CDT2, BCL6, SNAI1 and PRDM1/BLIMP1. The SCF(FBXO11) complex mediates ubiquitination and degradation of BCL6, thereby playing a role in the germinal center B-cells terminal differentiation toward memory B-cells and plasma cells. The SCF(FBXO11) complex also mediates ubiquitination and degradation of DTL, an important step for the regulation of TGF-beta signaling, cell migration and the timing of the cell-cycle progression and exit. The SCF(FBXO11) complex also catalyzes ubiquitination and degradation of GSK3B-phosphorylated SNAI1. Binds to and neddylates phosphorylated p53/TP53, inhibiting its transcriptional activity. Plays a role in the regulatiom of erythropoiesis but not myelopoiesis or megakaryopoiesis. Mechanistically, activates erythroid genes by mediating the degradation of BAHD1, a heterochromatin-associated protein that recruits corepressors to H3K27me3 marks. Participates in macrophage cell death and inflammation in response to bacterial toxins by regulating the expression of complement 5a receptor 1/C5AR1 and IL-1beta. Acts as a critical regulator to determine the level of MHC-II by mediating the recognition of degron at the P/S/T domain of CIITA leading to its ubiquitination and subsequent degradation via the proteasome. Participates in the antiviral repsonse by initiating the activation of TBK1-IRF3-IFN-I axis. Mediates the 'Lys-63'-linked ubiquitination of TRAF3 to strengthen the interaction between TRAF3 and TBK1. This is F-box only protein 11 (Fbxo11) from Rattus norvegicus (Rat).